An 89-amino-acid chain; its full sequence is Small ribosomal subunit protein uS15 (89 aa).

Belongs to the universal ribosomal protein uS15 family. As to quaternary structure, part of the 30S ribosomal subunit. Forms a bridge to the 50S subunit in the 70S ribosome, contacting the 23S rRNA.

Functionally, one of the primary rRNA binding proteins, it binds directly to 16S rRNA where it helps nucleate assembly of the platform of the 30S subunit by binding and bridging several RNA helices of the 16S rRNA. In terms of biological role, forms an intersubunit bridge (bridge B4) with the 23S rRNA of the 50S subunit in the ribosome. This chain is Small ribosomal subunit protein uS15, found in Shouchella clausii (strain KSM-K16) (Alkalihalobacillus clausii).